The sequence spans 256 residues: Hypodermin-B (256 aa).

An N-terminal signal peptide occupies residues 1–22 (MLKFVILVCSVACVFGAVVPGG). The propeptide at 23 to 30 (MLPQLDGR) is activation peptide. The 224-residue stretch at 31–254 (IVGGFEADIE…VRSWITENAK (224 aa)) folds into the Peptidase S1 domain. Cys56 and Cys72 are joined by a disulfide. Active-site charge relay system residues include His71 and Asp116. Intrachain disulfides connect Cys180–Cys197 and Cys206–Cys230. The Charge relay system role is filled by Ser210.

The protein belongs to the peptidase S1 family.

It is found in the secreted. In terms of biological role, protease that shows preferential cleavage after Arg and Lys residues. The polypeptide is Hypodermin-B (Hypoderma lineatum (Early cattle grub)).